The sequence spans 101 residues: NADH-quinone oxidoreductase subunit K (101 aa).

Transmembrane regions (helical) follow at residues 4–24 (LSHY…GIFL), 30–50 (IVLL…FIAF), and 61–81 (IFVF…LAIL).

This sequence belongs to the complex I subunit 4L family. In terms of assembly, NDH-1 is composed of 14 different subunits. Subunits NuoA, H, J, K, L, M, N constitute the membrane sector of the complex.

Its subcellular location is the cell inner membrane. It carries out the reaction a quinone + NADH + 5 H(+)(in) = a quinol + NAD(+) + 4 H(+)(out). NDH-1 shuttles electrons from NADH, via FMN and iron-sulfur (Fe-S) centers, to quinones in the respiratory chain. The immediate electron acceptor for the enzyme in this species is believed to be ubiquinone. Couples the redox reaction to proton translocation (for every two electrons transferred, four hydrogen ions are translocated across the cytoplasmic membrane), and thus conserves the redox energy in a proton gradient. This chain is NADH-quinone oxidoreductase subunit K, found in Aromatoleum aromaticum (strain DSM 19018 / LMG 30748 / EbN1) (Azoarcus sp. (strain EbN1)).